A 333-amino-acid polypeptide reads, in one-letter code: Phosphoribosylformylglycinamidine cyclo-ligase (333 aa).

Belongs to the AIR synthase family.

It is found in the cytoplasm. It carries out the reaction 2-formamido-N(1)-(5-O-phospho-beta-D-ribosyl)acetamidine + ATP = 5-amino-1-(5-phospho-beta-D-ribosyl)imidazole + ADP + phosphate + H(+). Its pathway is purine metabolism; IMP biosynthesis via de novo pathway; 5-amino-1-(5-phospho-D-ribosyl)imidazole from N(2)-formyl-N(1)-(5-phospho-D-ribosyl)glycinamide: step 2/2. The chain is Phosphoribosylformylglycinamidine cyclo-ligase from Methanosarcina barkeri (strain Fusaro / DSM 804).